Consider the following 613-residue polypeptide: Glutaminase 1 (613 aa).

The interval Gly33 to Leu315 is glutaminase. The substrate site is built by Ser75, Asn124, Glu168, Asn175, Tyr199, Tyr251, and Val269. The STAS domain occupies Arg345–Asp457. Residue Leu480–Leu595 participates in a nucleoside 3',5'-cyclic phosphate binding.

The protein belongs to the glutaminase family. As to quaternary structure, homotetramer.

The enzyme catalyses L-glutamine + H2O = L-glutamate + NH4(+). In Bradyrhizobium diazoefficiens (strain JCM 10833 / BCRC 13528 / IAM 13628 / NBRC 14792 / USDA 110), this protein is Glutaminase 1 (glsA1).